The sequence spans 108 residues: Bublin coiled-coil protein (108 aa).

2 disordered regions span residues 1–23 (MSGP…DDDF) and 67–108 (RLEF…DEGS). Residues 25-73 (SEEYEAINSMLDQINSYLDDLEERNDSLNGKLHELMESNRQARLEFRAQ) are a coiled coil. A compositionally biased stretch (basic and acidic residues) spans 99-108 (ENDKKIDEGS).

Belongs to the UPF0184 (EST00098) family.

Its subcellular location is the cell junction. It localises to the cytoplasm. The protein resides in the cytoskeleton. In terms of biological role, essential for intermediate filament organization in intestinal cells, interacts with intermediate filament and regulates intestinal lumen morphology. This chain is Bublin coiled-coil protein (bbln), found in Takifugu rubripes (Japanese pufferfish).